The sequence spans 431 residues: Glutamate-1-semialdehyde 2,1-aminomutase (431 aa).

The residue at position 266 (K266) is an N6-(pyridoxal phosphate)lysine.

This sequence belongs to the class-III pyridoxal-phosphate-dependent aminotransferase family. HemL subfamily. As to quaternary structure, homodimer. The cofactor is pyridoxal 5'-phosphate.

It localises to the cytoplasm. It catalyses the reaction (S)-4-amino-5-oxopentanoate = 5-aminolevulinate. The protein operates within porphyrin-containing compound metabolism; protoporphyrin-IX biosynthesis; 5-aminolevulinate from L-glutamyl-tRNA(Glu): step 2/2. This chain is Glutamate-1-semialdehyde 2,1-aminomutase, found in Wolinella succinogenes (strain ATCC 29543 / DSM 1740 / CCUG 13145 / JCM 31913 / LMG 7466 / NCTC 11488 / FDC 602W) (Vibrio succinogenes).